A 345-amino-acid polypeptide reads, in one-letter code: uncharacterized protein (345 aa).

It belongs to the proline racemase family.

This is an uncharacterized protein from Bacillus anthracis.